The following is a 965-amino-acid chain: Sarcosine oxidase subunit alpha (965 aa).

9 residues coordinate NAD(+): Ala-139, Asp-158, Glu-159, Arg-160, Thr-166, Val-205, Ala-418, Leu-423, and Thr-425. Positions 692 and 784 each coordinate (6R)-5,10-methylene-5,6,7,8-tetrahydrofolate.

Belongs to the GcvT family. In terms of assembly, heterotetramer composed of subunits alpha (SoxA), beta (SoxB), gamma (SoxG) and delta (SoxD). NAD(+) serves as cofactor.

The protein localises to the cytoplasm. The catalysed reaction is sarcosine + (6S)-5,6,7,8-tetrahydrofolate + O2 = (6R)-5,10-methylene-5,6,7,8-tetrahydrofolate + glycine + H2O2. It catalyses the reaction sarcosine + O2 + H2O = formaldehyde + glycine + H2O2. Inhibited by Zn(2+), Cu(2+), Cd(2+), Hg(2+), Ag(+), p-chloromercuribenzoate (p-CMB), iodoacetamide, N-ethylmaleimide, CN(-), o-phenanthroline and sodium lauryl sulfate. In the presence of tetrahydrofolate, catalyzes the oxidative demethylation of sarcosine to yield glycine, 5,10-methylenetetrahydrofolate and hydrogen peroxide. In the absence of tetrahydrofolate, catalyzes the oxidative demethylation of sarcosine to yield glycine, formaldehyde and hydrogen peroxide. Can also use N-methyl-L-alanine and N-ethyl-L-glycine. Is very specific for oxygen as an acceptor. This chain is Sarcosine oxidase subunit alpha, found in Corynebacterium sp. (strain U-96).